The sequence spans 27 residues: Antimicrobial peptide 1 (27 aa).

As to expression, expressed by the skin glands.

The protein resides in the secreted. Its function is as follows. Has very weak antimicrobial activity against Gram-positive bacterium S.aureus and Gram-negative bacterium E.coli and stronger activity against yeast C.albicans. Enhances the antibacterial activity of XT3. Has hemolytic activity against human red blood cells. This chain is Antimicrobial peptide 1, found in Xenopus tropicalis (Western clawed frog).